Consider the following 304-residue polypeptide: 3-diazoavenalumate denitrifying reductase (304 aa).

It belongs to the NAD(P)-dependent epimerase/dehydratase family.

It carries out the reaction 3-diazoavenalumate + NADPH + H(+) = avenalumate + N2 + NADP(+). It catalyses the reaction 3-diazoavenalumate + NADH + H(+) = avenalumate + N2 + NAD(+). The catalysed reaction is (E)-3-diazocoumarate + NADPH = N2 + (E)-4-coumarate + NADP(+). The enzyme catalyses (E)-3-diazocoumarate + NADH = N2 + (E)-4-coumarate + NAD(+). Oxidoreductase involved in the biosynthesis of avenalumic acid (AVA). Catalyzes the denitrification of 3-diazoavenalumic acid (3-DAA) to produce AVA. It can also act on 3-diazocoumaric acid (3-DCA). Can use NADPH or NADH as a reductant, with a preference for NADPH. This chain is 3-diazoavenalumate denitrifying reductase, found in Streptomyces sp.